Here is a 491-residue protein sequence, read N- to C-terminus: D-xylose-proton symporter (491 aa).

At 1–9 the chain is on the cytoplasmic side; the sequence is MNTQYNSSY. The chain crosses the membrane as a helical span at residues 10–30; that stretch reads IFSITLVATLGGLLFGYDTAV. Residues 31-55 are Periplasmic-facing; it reads ISGTVESLNTVFVAPQNLSESAANS. A helical membrane pass occupies residues 56–76; the sequence is LLGFCVASALIGCIIGGALGG. At 77–89 the chain is on the cytoplasmic side; sequence YCSNRFGRRDSLK. Residues 90-110 form a helical membrane-spanning segment; the sequence is IAAVLFFISGVGSAWPELGFT. The Periplasmic portion of the chain corresponds to 111 to 133; sequence SINPDNTVPVYLAGYVPEFVIYR. Residues 134-154 traverse the membrane as a helical segment; the sequence is IIGGIGVGLASMLSPMYIAEL. Topologically, residues 155-165 are cytoplasmic; that stretch reads APAHIRGKLVS. The helical transmembrane segment at 166–186 threads the bilayer; sequence FNQFAIIFGQLLVYCVNYFIA. Q168 is a binding site for beta-D-xylose. Residues 187–200 lie on the Periplasmic side of the membrane; sequence RSGDASWLNTDGWR. Residues 201 to 221 traverse the membrane as a helical segment; it reads YMFASECIPALLFLMLLYTVP. Over 222-272 the chain is Cytoplasmic; the sequence is ESPRWLMSRGKQEQAEGILRKIMGNTLATQAVQEIKHSLDHGRKTGGRLLM. The chain crosses the membrane as a helical span at residues 273-293; it reads FGVGVIVIGVMLSIFQQFVGI. Residues 288-289 and N294 each bind beta-D-xylose; that span reads QQ. Residues 294–312 are Periplasmic-facing; sequence NVVLYYAPEVFKTLGASTD. A helical transmembrane segment spans residues 313–333; that stretch reads IALLQTIIVGVINLTFTVLAI. The Cytoplasmic portion of the chain corresponds to 334–343; it reads MTVDKFGRKP. A helical membrane pass occupies residues 344–364; that stretch reads LQIIGALGMAIGMFSLGTAFY. The Periplasmic segment spans residues 365–369; the sequence is TQAPG. A helical transmembrane segment spans residues 370 to 390; sequence IVALLSMLFYVAAFAMSWGPV. The Cytoplasmic portion of the chain corresponds to 391-407; that stretch reads CWVLLSEIFPNAIRGKA. 2 residues coordinate beta-D-xylose: W392 and Q415. A helical membrane pass occupies residues 408 to 428; the sequence is LAIAVAAQWLANYFVSWTFPM. Topologically, residues 429–442 are periplasmic; sequence MDKNSWLVAHFHNG. A helical membrane pass occupies residues 443–463; it reads FSYWIYGCMGVLAALFMWKFV. Residues 464-491 lie on the Cytoplasmic side of the membrane; it reads PETKGKTLEELEALWEPETKKTQQTATL.

This sequence belongs to the major facilitator superfamily. Sugar transporter (TC 2.A.1.1) family.

It localises to the cell inner membrane. It carries out the reaction D-xylose(in) + H(+)(in) = D-xylose(out) + H(+)(out). Its function is as follows. Uptake of D-xylose across the boundary membrane with the concomitant transport of protons into the cell (symport system). The polypeptide is D-xylose-proton symporter (xylE) (Escherichia coli O157:H7).